The following is an 876-amino-acid chain: Nitrogen regulatory protein areA (876 aa).

The segment covering methionine 1 to glycine 11 has biased composition (gly residues). 6 disordered regions span residues methionine 1–serine 65, glutamine 137–serine 159, isoleucine 192–phenylalanine 248, phenylalanine 393–glycine 413, tyrosine 451–phenylalanine 498, and serine 573–threonine 672. Polar residues-rich tracts occupy residues aspartate 198–threonine 211, glycine 399–glutamine 408, and glutamine 455–glycine 480. The span at valine 602–arginine 611 shows a compositional bias: basic and acidic residues. Residues alanine 615 to proline 640 show a composition bias toward polar residues. The GATA-type zinc-finger motif lies at cysteine 673–cysteine 697. Positions asparagine 721–lysine 742 form a DNA-binding region, H-T-H motif. Composition is skewed to polar residues over residues serine 724–arginine 734 and lysine 742–serine 766. Residues serine 724–asparagine 856 form a disordered region. Composition is skewed to low complexity over residues proline 782–proline 798 and serine 828–alanine 855.

In terms of assembly, interacts with nmrA.

The protein resides in the nucleus. In terms of biological role, transcription activator that binds the consensus DNA element 5'-CGATAG-3' and mediates nitrogen metabolite repression. Activates the transcription of uapA. The sequence is that of Nitrogen regulatory protein areA (areA) from Emericella nidulans (strain FGSC A4 / ATCC 38163 / CBS 112.46 / NRRL 194 / M139) (Aspergillus nidulans).